Reading from the N-terminus, the 93-residue chain is Large ribosomal subunit protein eL42 (93 aa).

Residues Cys11, Cys14, Cys71, and Cys74 each coordinate Zn(2+). The segment at 11–74 (CPYCKKHTSH…IALRLVCDEC (64 aa)) adopts a C4-type zinc-finger fold.

It belongs to the eukaryotic ribosomal protein eL42 family. Part of the 50S ribosomal subunit. Requires Zn(2+) as cofactor.

Its function is as follows. Binds to the 23S rRNA. The chain is Large ribosomal subunit protein eL42 from Thermoplasma acidophilum (strain ATCC 25905 / DSM 1728 / JCM 9062 / NBRC 15155 / AMRC-C165).